Here is a 141-residue protein sequence, read N- to C-terminus: uncharacterized protein (141 aa).

This sequence belongs to the peptidase C56 family.

This is an uncharacterized protein from Streptomyces lividans.